Consider the following 836-residue polypeptide: Serine/threonine-protein kinase ppk5 (836 aa).

Disordered stretches follow at residues 1-29 (MVGL…FLSP), 192-214 (INQL…TLSS), 230-307 (CSQF…YKSI), and 328-381 (TPLD…ERQN). Polar residues-rich tracts occupy residues 192–205 (INQL…TNYP), 232–241 (QFASPRSSIV), and 265–288 (KPSN…TKLT). A compositionally biased stretch (basic and acidic residues) spans 289–298 (SQRDNDHQKD). Positions 338–347 (SGKKFNKNSK) are enriched in basic residues. Residues 353–362 (STISSYSSAS) show a composition bias toward low complexity. Positions 518–814 (YEIIDTVGKG…VDSALQHEFI (297 aa)) constitute a Protein kinase domain. ATP is bound by residues 524-532 (VGKGSFGQV) and K547. D644 serves as the catalytic Proton acceptor. Position 678 is a phosphotyrosine (Y678).

This sequence belongs to the protein kinase superfamily. CMGC Ser/Thr protein kinase family. MNB/DYRK subfamily.

The protein localises to the cytoplasm. It catalyses the reaction L-seryl-[protein] + ATP = O-phospho-L-seryl-[protein] + ADP + H(+). It carries out the reaction L-threonyl-[protein] + ATP = O-phospho-L-threonyl-[protein] + ADP + H(+). Functionally, has a role in meiosis. This Schizosaccharomyces pombe (strain 972 / ATCC 24843) (Fission yeast) protein is Serine/threonine-protein kinase ppk5 (ppk5).